A 376-amino-acid chain; its full sequence is MLDLIQTRRALHQIPEIGLEEFKTQAYLLDVIEKLTTGKDFVQIRTWRTGILVYLQGSQPERTIGWRTDIDGLPIVEQTGLPFASQHQGRMHACGHDFHMTIALGCLERALEEQPKNNLLFLFQPAEENEAGGMLMYEDDAFGDWLPDQFYGLHVRPDLKVGQIATNTHTLFAGTCEVKIRFKGKGGHAAFPHEANDALVAASYFVTQVQSVVSRNVNPIEGAVVTFGVFQAGTTNNVITDTAFLHGTIRALTQDMSLLVQKRVKTVAEGVAAAFDMEVEVELKQGGYLPVENNPALARELMDFFDEKDGIELIDIEPAMTGEDFGYLLSKVDGVMFWLGIDSPYALHHPQMSPKEEVLAIGVAAVSSFLKKKAAE.

The active site involves D69. E128 functions as the Proton acceptor in the catalytic mechanism.

Belongs to the peptidase M20A family. N-acetyldiaminopimelate deacetylase subfamily.

The enzyme catalyses N-acetyl-(2S,6S)-2,6-diaminopimelate + H2O = (2S,6S)-2,6-diaminopimelate + acetate. The protein operates within amino-acid biosynthesis; L-lysine biosynthesis via DAP pathway; LL-2,6-diaminopimelate from (S)-tetrahydrodipicolinate (acetylase route): step 3/3. Functionally, catalyzes the conversion of N-acetyl-diaminopimelate to diaminopimelate and acetate. This chain is N-acetyldiaminopimelate deacetylase, found in Streptococcus pneumoniae (strain Hungary19A-6).